The chain runs to 208 residues: Putative 3-methyladenine DNA glycosylase (208 aa).

It belongs to the DNA glycosylase MPG family.

This Lactobacillus delbrueckii subsp. bulgaricus (strain ATCC BAA-365 / Lb-18) protein is Putative 3-methyladenine DNA glycosylase.